Reading from the N-terminus, the 498-residue chain is MTGASPRPLMVLGTSSGAGKSLMTAALCRVLQRRGEQALPFKGQNMSNNAWVDADGGEMAYSQAMQAWAAGLEPCCSMNPVLLKPRGDSTSEVIHGGQSVGIARAEHYYRDWFRPGWKAIRTGLMQLQQQWPQGRLVLEGAGSPVEVNLQRRDLTNLRLAQYLRANCLLVADIERGGVFAQIVGTLSLLRPVESPLIKGILINRFRGRRELFDEGRRWLEANTGVPVLGVMPWLNELFPPEDSLDLLERKPTRGATDLEIAVLRLPSLSNFSDLDPLEAEASLRLRWIQPGEPLGEPDAVILPGSKQTLRDLEAMNSCGLADQLRAYAQAGGSVLGICGGMQMLGRSLSDPEGLEGTDQRCSQNGLGLLPLETTFSGTKRLSQRSIDGLWPMETPLSGFELHYGTTIPDAGLQPLSSDPGLGWWAPGPKGSSVVGTYLHGLLDNGPWRRAWLNRLREQRGLQPLANDPKNHSAHRDLLLDRLADAFEQHVNLAPLLQP.

The GATase cobBQ-type domain maps to 257-447 (DLEIAVLRLP…LHGLLDNGPW (191 aa)). The active-site Nucleophile is Cys-338. His-439 is a catalytic residue.

The protein belongs to the CobB/CobQ family. CobQ subfamily.

It functions in the pathway cofactor biosynthesis; adenosylcobalamin biosynthesis. In terms of biological role, catalyzes amidations at positions B, D, E, and G on adenosylcobyrinic A,C-diamide. NH(2) groups are provided by glutamine, and one molecule of ATP is hydrogenolyzed for each amidation. The chain is Cobyric acid synthase from Synechococcus sp. (strain CC9605).